Here is a 798-residue protein sequence, read N- to C-terminus: MFSSKERFADLFLKRLEMTCGKSFKDSAKLDQYKTLGNMVREYISADWIETNEKSRSNSGKQTYYLSIEFLLGQLLEQNLMNLGVRDVVEAGLKEIGINLEEILQIENDAGLGNGGLGRLAACFLDSLASLNLPGHGMGIRYKHGLFEQKIVDGHQVELPEQWLKNGNVWEVRNADQAVDVPFWGEVHMTEKSGRLHFRHEQATIVTAVPYDIPIIGYETGTVNTLRLWNAEPYAHYHGGNILSYKRETEAVSEFLYPDDTHDEGKILRLKQQYFLVCASLKSIVNNYRKTHKSLSGLHKKVSIHINDTHPALAVPELMRILLDEENMSWEEAWHITVHTISYTNHTTLSEALEKWPIHLFKPLLPRMYMIIEEINERFCRAVWEKYPGDWKRIENMAITAHGVVKMAHLAIVGSYSVNGVAKIHSDILKEREMRDFHLLFPNRFNNKTNGIAHRRWLLKANPGLSAIITEAIGDEWVKQPESLIRLEPYATDPAFIEQFQNNKSKKKQELADLIFCTAGVVVNPESIFDVQVKRLHAYKRQLLNVLHIMYLYNRLKEDSGFSIYPQTFIFGAKASPSYYYAKKIIKLIHSVAEKVNYDPAVKQLIKVVFLENYRVSMAERIFPASDVSEQISTASKEASGTGNMKFMMNGALTIGTHDGANIEILERVGPDCIYTFGLKADEVLSYQENGGYRSREYYQHDRRIRQVADQLINGFFEGEADEFESIFDSLLPHNDEYFVLKDFSSYADAQERIQADYRERRKWSEHSIVNIAHSGYFSSDRTIREYAKDIWGIKPMM.

K646 bears the N6-(pyridoxal phosphate)lysine mark.

Belongs to the glycogen phosphorylase family. Pyridoxal 5'-phosphate is required as a cofactor.

The enzyme catalyses [(1-&gt;4)-alpha-D-glucosyl](n) + phosphate = [(1-&gt;4)-alpha-D-glucosyl](n-1) + alpha-D-glucose 1-phosphate. Phosphorylase is an important allosteric enzyme in carbohydrate metabolism. Enzymes from different sources differ in their regulatory mechanisms and in their natural substrates. However, all known phosphorylases share catalytic and structural properties. This is Glycogen phosphorylase (glgP) from Bacillus subtilis (strain 168).